Consider the following 438-residue polypeptide: Aspartate--tRNA(Asp) ligase (438 aa).

Glu-170 contributes to the L-aspartate binding site. The tract at residues Gln-192–Lys-195 is aspartate. L-aspartate is bound at residue Arg-214. ATP-binding positions include Arg-214 to Glu-216, Arg-222 to Leu-224, and Glu-361. 2 residues coordinate Mg(2+): Glu-361 and Ser-364. Ser-364 and Arg-368 together coordinate L-aspartate. Residue Gly-409–Arg-412 participates in ATP binding.

It belongs to the class-II aminoacyl-tRNA synthetase family. Type 2 subfamily. As to quaternary structure, homodimer. Mg(2+) serves as cofactor.

The protein resides in the cytoplasm. It carries out the reaction tRNA(Asp) + L-aspartate + ATP = L-aspartyl-tRNA(Asp) + AMP + diphosphate. In terms of biological role, catalyzes the attachment of L-aspartate to tRNA(Asp) in a two-step reaction: L-aspartate is first activated by ATP to form Asp-AMP and then transferred to the acceptor end of tRNA(Asp). The chain is Aspartate--tRNA(Asp) ligase from Pyrococcus abyssi (strain GE5 / Orsay).